Consider the following 191-residue polypeptide: Thymidylate kinase (191 aa).

Residue 7–14 (GVDGAGKS) participates in ATP binding.

It belongs to the thymidylate kinase family.

The enzyme catalyses dTMP + ATP = dTDP + ADP. Functionally, phosphorylation of dTMP to form dTDP in both de novo and salvage pathways of dTTP synthesis. The chain is Thymidylate kinase from Helicobacter pylori (strain P12).